Reading from the N-terminus, the 95-residue chain is UPF0512 protein H (95 aa).

The protein belongs to the UPF0512 family.

The chain is UPF0512 protein H from Dictyostelium discoideum (Social amoeba).